The primary structure comprises 62 residues: Large ribosomal subunit protein bL33 (62 aa).

It belongs to the bacterial ribosomal protein bL33 family.

The chain is Large ribosomal subunit protein bL33 from Cyanothece sp. (strain PCC 7425 / ATCC 29141).